Reading from the N-terminus, the 209-residue chain is Uridine kinase (209 aa).

ATP is bound at residue 16–23; sequence GGSGSGKT.

Belongs to the uridine kinase family.

The protein localises to the cytoplasm. The enzyme catalyses uridine + ATP = UMP + ADP + H(+). It carries out the reaction cytidine + ATP = CMP + ADP + H(+). It functions in the pathway pyrimidine metabolism; CTP biosynthesis via salvage pathway; CTP from cytidine: step 1/3. Its pathway is pyrimidine metabolism; UMP biosynthesis via salvage pathway; UMP from uridine: step 1/1. The chain is Uridine kinase from Lactiplantibacillus plantarum (strain ATCC BAA-793 / NCIMB 8826 / WCFS1) (Lactobacillus plantarum).